The primary structure comprises 105 residues: uncharacterized protein (105 aa).

A helical transmembrane segment spans residues 29–49; it reads NAFLLILSEAYLLFVFLSYLI.

The protein localises to the membrane. This is an uncharacterized protein from Saccharomyces cerevisiae (strain ATCC 204508 / S288c) (Baker's yeast).